The primary structure comprises 193 residues: Annexin-2 receptor (193 aa).

Residues 78-87 (QSTLEPSTAK) show a composition bias toward polar residues. Residues 78-111 (QSTLEPSTAKPTEFSWPGTQKQQEAPVEEVGQAE) are disordered.

In terms of tissue distribution, widely expressed. Highly expressed in lymphocytes. Expressed in both resting CD4(+) and CD8(+) T-cells.

May act as a receptor for annexin II on marrow stromal cells to induce osteoclast formation. The protein is Annexin-2 receptor (ANXA2R) of Homo sapiens (Human).